The primary structure comprises 209 residues: Large ribosomal subunit protein uL4 (209 aa).

The tract at residues 46-71 (GTSSTKTRSEVRGSSKKPWKQKGTGR) is disordered. Residues 59–71 (SSKKPWKQKGTGR) are compositionally biased toward basic residues.

Belongs to the universal ribosomal protein uL4 family. Part of the 50S ribosomal subunit.

One of the primary rRNA binding proteins, this protein initially binds near the 5'-end of the 23S rRNA. It is important during the early stages of 50S assembly. It makes multiple contacts with different domains of the 23S rRNA in the assembled 50S subunit and ribosome. Functionally, forms part of the polypeptide exit tunnel. This Borreliella afzelii (strain PKo) (Borrelia afzelii) protein is Large ribosomal subunit protein uL4.